A 474-amino-acid polypeptide reads, in one-letter code: Synaptotagmin-15B (474 aa).

Disordered stretches follow at residues 1-62 (MGVV…AASG) and 75-128 (PRAA…PPAV). Residues 75-88 (PRAAAGHQQHHGPP) are compositionally biased toward low complexity. C2 domains follow at residues 200–317 (CLGR…RRVI) and 331–452 (EFGD…EHWD).

Belongs to the synaptotagmin family.

This Homo sapiens (Human) protein is Synaptotagmin-15B.